A 134-amino-acid chain; its full sequence is L-ectoine synthase (134 aa).

This sequence belongs to the ectoine synthase family.

It carries out the reaction (2S)-4-acetamido-2-aminobutanoate = L-ectoine + H2O. It participates in amine and polyamine biosynthesis; ectoine biosynthesis; L-ectoine from L-aspartate 4-semialdehyde: step 3/3. Its function is as follows. Catalyzes the circularization of gamma-N-acetyl-alpha,gamma-diaminobutyric acid (ADABA) to ectoine (1,4,5,6-tetrahydro-2-methyl-4-pyrimidine carboxylic acid), which is an excellent osmoprotectant. The polypeptide is L-ectoine synthase (Shouchella clausii (strain KSM-K16) (Alkalihalobacillus clausii)).